The chain runs to 608 residues: Serine/threonine-protein kinase BUR1 (608 aa).

The Protein kinase domain occupies 39–346; that stretch reads YEIIQKLGQG…ALDALNHNYF (308 aa). ATP-binding positions include 45-53 and Lys68; that span reads LGQGTFGVV. Catalysis depends on Asp174, which acts as the Proton acceptor. Disordered regions lie at residues 383-419 and 443-571; these read HEAN…LALP and YIPK…FDED. Low complexity predominate over residues 400 to 411; it reads YNNSNNYPRNRN. Residues 471–482 show a composition bias toward basic and acidic residues; that stretch reads LRDRSPRREGHI. Positions 487 to 502 are enriched in low complexity; the sequence is STTNSNNISSNSSASN. 2 stretches are compositionally biased toward polar residues: residues 503 to 512 and 539 to 548; these read VGGTLSNPTH and PQSSSRNVSD. The segment covering 559-571 has biased composition (acidic residues); it reads EQNESDLTDFDED.

Belongs to the protein kinase superfamily. CMGC Ser/Thr protein kinase family. CDC2/CDKX subfamily.

It localises to the nucleus. The catalysed reaction is L-seryl-[protein] + ATP = O-phospho-L-seryl-[protein] + ADP + H(+). It carries out the reaction L-threonyl-[protein] + ATP = O-phospho-L-threonyl-[protein] + ADP + H(+). The enzyme catalyses [DNA-directed RNA polymerase] + ATP = phospho-[DNA-directed RNA polymerase] + ADP + H(+). In terms of biological role, serine/threonine-protein kinase involved in transcription regulation. Phosphorylates the UBC2/RAD6 ubiquitin-conjugating enzyme (E2), leading to monoubiquitination of histone H2B and the silencing of telomeric-associated genes. Also required for histone H3 methylation. Necessary for the recovery from pheromone-induced growth arrest in the cell cycle G1 phase. The sequence is that of Serine/threonine-protein kinase BUR1 (BUR1) from Debaryomyces hansenii (strain ATCC 36239 / CBS 767 / BCRC 21394 / JCM 1990 / NBRC 0083 / IGC 2968) (Yeast).